A 354-amino-acid polypeptide reads, in one-letter code: Holliday junction branch migration complex subunit RuvB (354 aa).

The segment at 1–183 is large ATPase domain (RuvB-L); it reads MTGDNLVSAY…FGFVAHLDFY (183 aa). ATP is bound by residues Arg-23, Gly-64, Lys-67, Thr-68, Ser-69, 130–132, Arg-173, Tyr-183, and Arg-220; that span reads EDF. Thr-68 contributes to the Mg(2+) binding site. Residues 184 to 254 are small ATPAse domain (RuvB-S); it reads SPADLETLLN…TAQAALTVYD (71 aa). The tract at residues 257–354 is head domain (RuvB-H); that stretch reads ALGLDRLDRA…DLFSVEPDQP (98 aa). Residues Arg-312 and Arg-317 each contribute to the DNA site.

It belongs to the RuvB family. As to quaternary structure, homohexamer. Forms an RuvA(8)-RuvB(12)-Holliday junction (HJ) complex. HJ DNA is sandwiched between 2 RuvA tetramers; dsDNA enters through RuvA and exits via RuvB. An RuvB hexamer assembles on each DNA strand where it exits the tetramer. Each RuvB hexamer is contacted by two RuvA subunits (via domain III) on 2 adjacent RuvB subunits; this complex drives branch migration. In the full resolvosome a probable DNA-RuvA(4)-RuvB(12)-RuvC(2) complex forms which resolves the HJ.

Its subcellular location is the cytoplasm. The catalysed reaction is ATP + H2O = ADP + phosphate + H(+). The RuvA-RuvB-RuvC complex processes Holliday junction (HJ) DNA during genetic recombination and DNA repair, while the RuvA-RuvB complex plays an important role in the rescue of blocked DNA replication forks via replication fork reversal (RFR). RuvA specifically binds to HJ cruciform DNA, conferring on it an open structure. The RuvB hexamer acts as an ATP-dependent pump, pulling dsDNA into and through the RuvAB complex. RuvB forms 2 homohexamers on either side of HJ DNA bound by 1 or 2 RuvA tetramers; 4 subunits per hexamer contact DNA at a time. Coordinated motions by a converter formed by DNA-disengaged RuvB subunits stimulates ATP hydrolysis and nucleotide exchange. Immobilization of the converter enables RuvB to convert the ATP-contained energy into a lever motion, pulling 2 nucleotides of DNA out of the RuvA tetramer per ATP hydrolyzed, thus driving DNA branch migration. The RuvB motors rotate together with the DNA substrate, which together with the progressing nucleotide cycle form the mechanistic basis for DNA recombination by continuous HJ branch migration. Branch migration allows RuvC to scan DNA until it finds its consensus sequence, where it cleaves and resolves cruciform DNA. The polypeptide is Holliday junction branch migration complex subunit RuvB (Salinispora tropica (strain ATCC BAA-916 / DSM 44818 / JCM 13857 / NBRC 105044 / CNB-440)).